A 300-amino-acid polypeptide reads, in one-letter code: Porphobilinogen deaminase (300 aa).

An S-(dipyrrolylmethanemethyl)cysteine modification is found at C239.

This sequence belongs to the HMBS family. In terms of assembly, monomer. The cofactor is dipyrromethane.

It catalyses the reaction 4 porphobilinogen + H2O = hydroxymethylbilane + 4 NH4(+). It participates in porphyrin-containing compound metabolism; protoporphyrin-IX biosynthesis; coproporphyrinogen-III from 5-aminolevulinate: step 2/4. Tetrapolymerization of the monopyrrole PBG into the hydroxymethylbilane pre-uroporphyrinogen in several discrete steps. This is Porphobilinogen deaminase from Francisella tularensis subsp. tularensis (strain WY96-3418).